The sequence spans 156 residues: Endoribonuclease YbeY (156 aa).

Zn(2+) is bound by residues histidine 122, histidine 126, and histidine 132.

The protein belongs to the endoribonuclease YbeY family. Requires Zn(2+) as cofactor.

It is found in the cytoplasm. Its function is as follows. Single strand-specific metallo-endoribonuclease involved in late-stage 70S ribosome quality control and in maturation of the 3' terminus of the 16S rRNA. This Symbiobacterium thermophilum (strain DSM 24528 / JCM 14929 / IAM 14863 / T) protein is Endoribonuclease YbeY.